Consider the following 114-residue polypeptide: uncharacterized protein (114 aa).

This is an uncharacterized protein from Escherichia coli O157:H7.